Here is a 153-residue protein sequence, read N- to C-terminus: Pheromone-binding protein Gp-9 (153 aa).

The first 19 residues, 1–19 (MKTFVLHIFIFAFVAFASA), serve as a signal peptide directing secretion. Cystine bridges form between cysteine 37-cysteine 77, cysteine 73-cysteine 129, and cysteine 118-cysteine 138.

It belongs to the PBP/GOBP family. Homodimer.

Its subcellular location is the secreted. Functionally, colony queen number, a major feature of social organization, is associated with worker genotype for Gp-9. Colonies are headed by either a single reproductive queen (monogyne form) or multiple queens (polygyne form). Differences in worker Gp-9 genotypes between social forms may cause differences in workers' abilities to recognize queens and regulate their numbers. The chain is Pheromone-binding protein Gp-9 from Solenopsis amblychila (Desert fire ant).